The following is a 3046-amino-acid chain: Nucleosome-remodeling factor subunit BPTF (3046 aa).

Residues 1-232 (MRGRRGRPPK…DIPPLEFPKS (232 aa)) form a disordered region. Residues 22-33 (PAPPPPPPPPTS) show a composition bias toward pro residues. Residues 62 to 72 (TRLSSPRGGSS) show a composition bias toward low complexity. Residues 78–87 (PPPPPAPPST) are compositionally biased toward pro residues. Residues 91-110 (GRGGRGGGGGRTGGGGGGGH) show a composition bias toward gly residues. The span at 129-186 (HESEEEEEEEDMVSEEEEEEDGDAEETQDSEDDEEDEMEEDDDDSDYPEEMEDDDDDA) shows a compositional bias: acidic residues. The span at 190–203 (TESSFRSHSTYSST) shows a compositional bias: low complexity. A compositionally biased stretch (basic residues) spans 205-215 (GRRKPRVHRPR). S216 carries the post-translational modification Phosphoserine. Residues 240–300 (NEHIMNVIAI…LKAVLREEDT (61 aa)) enclose the DDT domain. The PHD-type 1 zinc finger occupies 390 to 437 (DDHCRVCHKLGDLLCCETCSAVYHLECVKPPLEEVPEDEWQCEVCVAH). Basic and acidic residues-rich tracts occupy residues 567–609 (IDNV…SDDK) and 616–628 (EQGK…EVGD). A disordered region spans residues 567 to 774 (IDNVKSPEET…GAGKGASGST (208 aa)). Position 572 is a phosphoserine (S572). Residues 574–604 (EETEKDKNETENDSKDAEKNREEFEDQSLEK) are a coiled coil. Composition is skewed to polar residues over residues 631-653 (NSVS…SPSE) and 690-705 (TCES…SIQP). An interaction with KEAP1 region spans residues 640-749 (NTTNATSEET…PVSIQEEIVG (110 aa)). The span at 706–723 (NLENSNSSSELNSSQSES) shows a compositional bias: low complexity. The span at 725–738 (KAADDPENGERESH) shows a compositional bias: basic and acidic residues. 2 positions are modified to phosphoserine: S763 and S817. The segment at 839–921 (YFKLGQEGKY…QLENNIPSSF (83 aa)) is interaction with MAZ. At K880 the chain carries N6-acetyllysine. Residues 978–1007 (MTSIEREEKEKVKKKEKKQEEEETMQQATW) are a coiled coil. The interval 1057-1157 (YRKSLEGTKN…MKTESHVNCQ (101 aa)) is disordered. T1064 carries the phosphothreonine modification. Basic and acidic residues-rich tracts occupy residues 1087-1102 (IKIE…KGSD) and 1113-1152 (DISK…KTES). Glycyl lysine isopeptide (Lys-Gly) (interchain with G-Cter in SUMO2) cross-links involve residues K1088, K1138, and K1209. Disordered stretches follow at residues 1215 to 1339 (KGIG…GNDF), 1371 to 1448 (IVSS…FRTR), 1465 to 1537 (GEST…NGKD), and 1605 to 1706 (NSSE…GESK). 3 stretches are compositionally biased toward polar residues: residues 1220–1232 (TSTN…SESP), 1242–1257 (QSDS…ANND), and 1266–1285 (CSES…TTNK). S1231 is subject to Phosphoserine. Positions 1287-1305 (YPKDRVLDDVSIRSPETKC) are enriched in basic and acidic residues. S1300 carries the phosphoserine modification. T1303 carries the post-translational modification Phosphothreonine. S1310 is subject to Phosphoserine. Residues 1372-1386 (VSSSKSALHSSVPKS) are compositionally biased toward low complexity. 2 stretches are compositionally biased toward polar residues: residues 1409–1426 (SESN…SIQD) and 1434–1444 (VQNSNESISEQ). The segment covering 1491–1525 (KKLEERPVNKCSDQIKLKNTTDKKNNENRESEKKG) has biased composition (basic and acidic residues). Positions 1629–1656 (TLPSTKESDSTQTTTPSASCPESNSVNQ) are enriched in polar residues. A Glycyl lysine isopeptide (Lys-Gly) (interchain with G-Cter in SUMO2) cross-link involves residue K1730. 2 disordered regions span residues 1973-2003 (VPET…TPKQ) and 2041-2070 (QAKK…STIS). A coiled-coil region spans residues 2022 to 2050 (EIRAFAERVEKEKAQAVEQQAKKRLEQQK). Over residues 2054–2070 (IATSTTSPTSSTTSTIS) the composition is skewed to low complexity. At S2098 the chain carries Phosphoserine. R2155 bears the Omega-N-methylarginine mark. The disordered stretch occupies residues 2160–2180 (TIRPNTSGSGGTTSNSQVITG). Asymmetric dimethylarginine is present on residues R2162, R2184, and R2191. The segment covering 2232–2256 (VSAPNTVSSTPGQKSLTSATSTSNI) has biased composition (polar residues). Disordered regions lie at residues 2232-2270 (VSAP…QQGQ), 2346-2549 (TAST…RPQL), 2714-2733 (QAAK…SKQN), and 2795-2858 (PCPP…ISTT). 2 stretches are compositionally biased toward low complexity: residues 2257 to 2270 (QSSA…QQGQ) and 2346 to 2362 (TAST…AGTG). A compositionally biased stretch (polar residues) spans 2363 to 2375 (EQRQSKLSPQMQV). The segment covering 2391-2431 (PAEAQPQTAQPSAQPQPQTQPQSPAQPEVQTQPEVQTQTTV) has biased composition (low complexity). Residues 2432–2485 (SSHVPSEAQPTHAQSSKPQVAAQSQPQSNVQGQSPVRVQSPSQTRIRPSTPSQL) are compositionally biased toward polar residues. S2465 is modified (phosphoserine). Positions 2486 to 2538 (SPGQQSQVQTTTSQPIPIQPHTSLQIPSQGQPQSQPQVQSSTQTLSSGQTLNQ) are enriched in low complexity. The stretch at 2706-2732 (DKIDKEEKQAAKKRKREESVEQKRSKQ) forms a coiled coil. The segment covering 2714-2729 (QAAKKRKREESVEQKR) has biased composition (basic and acidic residues). The span at 2795–2818 (PCPPVTPAPPAPPAPPPSPPPPPA) shows a compositional bias: pro residues. The segment covering 2838–2847 (KREEEKDSSS) has biased composition (basic and acidic residues). A PHD-type 2 zinc finger spans residues 2867–2918 (KLYCICKTPYDESKFYIGCDRCQNWYHGRCVGILQSEAELIDEYVCPQCQST). Positions 2927–3031 (PLTEKDYEGL…SFFVQKLKGF (105 aa)) constitute a Bromo domain.

The protein belongs to the PBTF family. In terms of assembly, interacts with MAZ. Interacts with KEAP1. Component of the NURF-1 ISWI chromatin remodeling complex (also called the nucleosome-remodeling factor (NURF) complex) at least composed of SMARCA1 (isoform 2), BPTF, RBBP4 and RBBP7. Within the complex interacts with isoform 2 of SMARCA1. Component of the BPFT-SMARCA1 complex at least composed of SMARCA1 (isoform 1), BPFT, RBBP4 and RBBP7; the complex is catalytically inactive and does not remodel chromatin. Within the complex interacts with isoform 1 of SMARCA1. Component of the NURF-5 ISWI chromatin remodeling complex at least composed of SMARCA5/SNF2H and BPTF. Within NURF-5 ISWI chromatin remodeling complex interacts with SMARCA5/SNF2H. Post-translationally, phosphorylation enhances DNA-binding. In terms of processing, highly susceptible to proteolysis. Ubiquitously expressed, with highest levels in testis. Present in kidney, liver and brain. In the brain, highest levels are found in motor cortex (at protein level).

The protein localises to the cytoplasm. It is found in the nucleus. In terms of biological role, regulatory subunit of the ATP-dependent NURF-1 and NURF-5 ISWI chromatin remodeling complexes, which form ordered nucleosome arrays on chromatin and facilitate access to DNA during DNA-templated processes such as DNA replication, transcription, and repair. The NURF-1 ISWI chromatin remodeling complex has a lower ATP hydrolysis rate than the NURF-5 ISWI chromatin remodeling complex. Within the NURF-1 ISWI chromatin-remodeling complex, binds to the promoters of En1 and En2 to positively regulate their expression and promote brain development. Histone-binding protein which binds to H3 tails trimethylated on 'Lys-4' (H3K4me3), which mark transcription start sites of active genes. Binds to histone H3 tails dimethylated on 'Lys-4' (H3K4Me2) to a lesser extent. May also regulate transcription through direct binding to DNA or transcription factors. The polypeptide is Nucleosome-remodeling factor subunit BPTF (BPTF) (Homo sapiens (Human)).